We begin with the raw amino-acid sequence, 304 residues long: Large ribosomal subunit protein uL2 (304 aa).

Residues 246-282 form a disordered region; it reads HTRGTAMNPVDHPHGGGEGRTRGKHPESPWGWKTKGY. Positions 256 to 272 are enriched in basic and acidic residues; the sequence is DHPHGGGEGRTRGKHPE.

The protein belongs to the universal ribosomal protein uL2 family. Part of the 50S ribosomal subunit. Forms a bridge to the 30S subunit in the 70S ribosome.

Its function is as follows. One of the primary rRNA binding proteins. Required for association of the 30S and 50S subunits to form the 70S ribosome, for tRNA binding and peptide bond formation. It has been suggested to have peptidyltransferase activity; this is somewhat controversial. Makes several contacts with the 16S rRNA in the 70S ribosome. This Aquifex aeolicus (strain VF5) protein is Large ribosomal subunit protein uL2.